Here is a 277-residue protein sequence, read N- to C-terminus: 2-dehydro-3-deoxyphosphooctonate aldolase (277 aa).

It belongs to the KdsA family.

The protein resides in the cytoplasm. It catalyses the reaction D-arabinose 5-phosphate + phosphoenolpyruvate + H2O = 3-deoxy-alpha-D-manno-2-octulosonate-8-phosphate + phosphate. It participates in carbohydrate biosynthesis; 3-deoxy-D-manno-octulosonate biosynthesis; 3-deoxy-D-manno-octulosonate from D-ribulose 5-phosphate: step 2/3. The protein operates within bacterial outer membrane biogenesis; lipopolysaccharide biosynthesis. This chain is 2-dehydro-3-deoxyphosphooctonate aldolase, found in Dichelobacter nodosus (strain VCS1703A).